Here is a 938-residue protein sequence, read N- to C-terminus: MQNSENHHPHHHHHHSDTEIIGNDRASYSGPLSGPLNKRGGKKSARFNIPESTDIGTSAGAGAKSNDDAYVEITLDVREDSVAVHSVKTAGGADVEDPELALLAKGLEKKSTLGASLVRNASSRIRQVSQELKRLASLNKRPIPTGRFDRNKSAAAHALKGLKFISKTDGGAGWAAVEKRFDEITAPTTGLLPRAKFGECIGMNKESKEFAGELYDALARRRNITTDSINKAQLKEFWDQVADQSFDTRLQTFFDMVDKDADGRITEEEVREIIGLSASANRLSTIQKQSDEYAAMIMEELDPNNLGYIMIENLEMLLLQAPNQSVQRGGESRNLSQMLSQKLKHTQEPNPLVRWYKSFMYFLLDNWQRVWVLLLWIGIMAVLFTWKYIQYKQKAAYDVMGPCVCLAKGAAETIKLNMAIILLPVCRNTITWLRNKTRLGSAVPFDDNLNFHKVIAVAIALGVAIHGLAHLTCDFPKLLNASEEAYEPMIYYFGEQPESYWWFVRGVEGVTGIIMVVLMAIAFTLATPWFRRGRVSFPKPFHKLTGFNAFWYSHHLFIIVYTLLIVHGEKLYITKDWYKRSTWMYLTVPLVLYAGERLLRAFRSSIKAVKILKVAVYPGNVLALHMSKPQGYKYKSGQYMFVNCAAVSPFEWHPFSITSAPGDDHLSVHIRTLGDWTRQLKTVFSEVCQPPPNGKSGLLRADYLQGENNPNFPRVLIDGPYGAPAQDYKQYEVVLLVGLGIGATPMISIVKDIVNNMKAMDEEENSLENGNGMSNAAQNASPNMAQKRGKSSSASGGNSFNTRRAYFYWVTREQGSFDWFKGIMNEAAEMDHKGVIEMHNYCTSVYEEGDARSALITMLQSLHHAKSGVDIVSGTRVKSHFAKPNWRNVYKRIALNHPEAKVGVFYCGAPALTKELKQHALNFSHKTSTKFDFHKENF.

Residues 1–63 are disordered; sequence MQNSENHHPH…DIGTSAGAGA (63 aa). Residues 1 to 369 are Cytoplasmic-facing; the sequence is MQNSENHHPH…MYFLLDNWQR (369 aa). The stretch at 115-141 forms a coiled coil; sequence ASLVRNASSRIRQVSQELKRLASLNKR. 2 EF-hand-like regions span residues 185-195 and 222-233; these read TAPTTGLLPRA and RNITTDSINKAQ. EF-hand domains follow at residues 245 to 280 and 289 to 324; these read SFDTRLQTFFDMVDKDADGRITEEEVREIIGLSASA and QSDEYAAMIMEELDPNNLGYIMIENLEMLLLQAPNQ. Residues D258, D260, D262, R264, and E269 each coordinate Ca(2+). A helical membrane pass occupies residues 370 to 390; it reads VWVLLLWIGIMAVLFTWKYIQ. Residues 391–402 lie on the Extracellular side of the membrane; that stretch reads YKQKAAYDVMGP. The helical transmembrane segment at 403-423 threads the bilayer; sequence CVCLAKGAAETIKLNMAIILL. Positions 408-565 constitute a Ferric oxidoreductase domain; that stretch reads KGAAETIKLN…LFIIVYTLLI (158 aa). Over 424-454 the chain is Cytoplasmic; sequence PVCRNTITWLRNKTRLGSAVPFDDNLNFHKV. The chain crosses the membrane as a helical span at residues 455-475; that stretch reads IAVAIALGVAIHGLAHLTCDF. Residues 476–509 lie on the Extracellular side of the membrane; the sequence is PKLLNASEEAYEPMIYYFGEQPESYWWFVRGVEG. Residues 510–530 traverse the membrane as a helical segment; it reads VTGIIMVVLMAIAFTLATPWF. The Cytoplasmic segment spans residues 531–545; the sequence is RRGRVSFPKPFHKLT. A helical membrane pass occupies residues 546–566; the sequence is GFNAFWYSHHLFIIVYTLLIV. Residues 567-580 lie on the Extracellular side of the membrane; that stretch reads HGEKLYITKDWYKR. The chain crosses the membrane as a helical span at residues 581–599; the sequence is STWMYLTVPLVLYAGERLL. Residues 599–727 form the FAD-binding FR-type domain; that stretch reads LRAFRSSIKA…DGPYGAPAQD (129 aa). The Cytoplasmic segment spans residues 600 to 732; it reads RAFRSSIKAV…APAQDYKQYE (133 aa). A helical membrane pass occupies residues 733-753; the sequence is VVLLVGLGIGATPMISIVKDI. At 754–938 the chain is on the extracellular side; sequence VNNMKAMDEE…TKFDFHKENF (185 aa). A disordered region spans residues 762–796; the sequence is EEENSLENGNGMSNAAQNASPNMAQKRGKSSSASG. Over residues 767–784 the composition is skewed to polar residues; sequence LENGNGMSNAAQNASPNM.

It belongs to the RBOH (TC 5.B.1.3) family. In terms of assembly, monomer and homodimer. In terms of processing, phosphorylated by CPK. Expressed in leaves.

It is found in the membrane. In terms of biological role, calcium-dependent NADPH oxidase that generates superoxide. May be responsible for the oxidative burst in response to pathogen attack in the leaves. This Solanum tuberosum (Potato) protein is Respiratory burst oxidase homolog protein C (RBOHC).